Reading from the N-terminus, the 1851-residue chain is Voltage-dependent calcium channel type A subunit alpha-1 (1851 aa).

The Cytoplasmic segment spans residues 1 to 38 (MGGPKKEENPPGGGPTSLFILTEDNPIRKYTRFIIEWP). The I repeat unit spans residues 25–316 (NPIRKYTRFI…LVLGVLSGEF (292 aa)). Residues 39 to 57 (PFEYAVLLTIIANCVVLAL) traverse the membrane as a helical segment. Residues 58 to 75 (EEHLPGGDKTVLAQKLEK) are Extracellular-facing. Residues 76–95 (TEAYFLCIFCVEASLKILAL) form a helical membrane-spanning segment. The Cytoplasmic segment spans residues 96–107 (GLVLHKHSYLRN). A helical transmembrane segment spans residues 108–128 (IWNIMDFFVVVTGFMTQYPQI). Over 129 to 133 (GPEVD) the chain is Extracellular. The chain crosses the membrane as a helical span at residues 134-152 (LRTLRAIRVLRPLKLVSGI). Residues 153–171 (PSLQVVLKSIIKAMAPLLQ) lie on the Cytoplasmic side of the membrane. A helical transmembrane segment spans residues 172–191 (IGLLVLFAIVIFAIIGLEFY). Over 192-288 (SGALHKTCYS…WTNDALGSAF (97 aa)) the chain is Extracellular. N-linked (GlcNAc...) asparagine glycans are attached at residues N234 and N235. A helical transmembrane segment spans residues 289-313 (NWIYFVPLIVIGSFFMLNLVLGVLS). At 314-441 (GEFSNERNRV…FWIRHTVKTQ (128 aa)) the chain is on the cytoplasmic side. Positions 381 to 417 (RKKLKSLGKSKSTDTEEEEAEEDYGDDGYLKTRSKPQ) are disordered. Over residues 395–406 (TEEEEAEEDYGD) the composition is skewed to acidic residues. One copy of the II repeat lies at 427–670 (EKRFRFWIRH…VFLAIAVDNL (244 aa)). The helical transmembrane segment at 442-460 (WFYWFVIVLVFLNTVCVAV) threads the bilayer. Residues 461–475 (EHYGQPSFLTEFLYY) are Extracellular-facing. Residues 476–495 (AEFIFLGLFMSEMFIKMYAL) form a helical membrane-spanning segment. The Cytoplasmic segment spans residues 496-503 (GPRIYFES). A helical transmembrane segment spans residues 504–522 (SFNRFDCVVISGSIFEVIW). Residues 523 to 531 (SEVKGGSFG) are Extracellular-facing. A helical transmembrane segment spans residues 532–550 (LSVLRALRLLRIFKVTKYW). The Cytoplasmic portion of the chain corresponds to 551–569 (SSLRNLVISLLNSMRSIIS). Residues 570 to 589 (LLFLLFLFILIFALLGMQLF) form a helical membrane-spanning segment. Residues 590–642 (GGQFNLPGGTPETNFNTFPIALLTVFQILTGEDWNEVMYQGIISQGGAQKGMI) lie on the Extracellular side of the membrane. A helical membrane pass occupies residues 643 to 667 (YSIYFIVLVLFGNYTLLNVFLAIAV). Residues 668-767 (DNLANAQELT…IRRGAHWVVN (100 aa)) are Cytoplasmic-facing. Positions 710–741 (ENGDGAVAPSKSKGKKKEEEKKEEEEVTEGPK) are disordered. The III repeat unit spans residues 762–1049 (AHWVVNLPYF…IITFQEQGEA (288 aa)). A helical transmembrane segment spans residues 768–786 (LPYFDFFIMVVISMSSIAL). At 787–802 (AAEDPVRENSRRNKIL) the chain is on the extracellular side. The chain crosses the membrane as a helical span at residues 803-822 (NYFDYAFTGVFTIEMLLKIV). The Cytoplasmic segment spans residues 823–834 (DLGVILHPGSYL). Residues 835 to 853 (REFWNIMDAVVVICAAVSF) form a helical membrane-spanning segment. At 854-866 (GFDMSGSSAGQNL) the chain is on the extracellular side. N865 carries N-linked (GlcNAc...) asparagine glycosylation. Residues 867-885 (STIKSLRVLRVLRPLKTIK) traverse the membrane as a helical segment. The Cytoplasmic portion of the chain corresponds to 886–904 (RVPKLKAVFDCVVNSLKNV). Residues 905–924 (VNILIVYILFQFIFSVIGVQ) traverse the membrane as a helical segment. Residues 925–1013 (LFNGKFFYCT…EDRGPIQNFR (89 aa)) lie on the Extracellular side of the membrane. A helical membrane pass occupies residues 1014-1038 (IEMSIFYIVYFIVFPFFFVNIFVAL). At 1039-1093 (IIITFQEQGEAELQDGEIDKNQKSCIDFTIGARPLERYMPKNRNTFKYKVWRIVV) the chain is on the cytoplasmic side. The IV repeat unit spans residues 1086–1347 (YKVWRIVVST…DNFDYLTRDS (262 aa)). The helical transmembrane segment at 1094 to 1122 (STPFEYFIMMLIVFNTLLLMMKYHNQGDM) threads the bilayer. The Extracellular portion of the chain corresponds to 1123-1127 (YEKSL). A helical transmembrane segment spans residues 1128–1147 (KYINMGFTGMFSVETVLKII). Residues 1148 to 1155 (GFGVKNFF) lie on the Cytoplasmic side of the membrane. Residues 1156–1174 (KDPWNIFDLITVLGSIVDA) traverse the membrane as a helical segment. The Extracellular segment spans residues 1175–1184 (LWMEFGHDDS). A helical transmembrane segment spans residues 1185-1203 (NSINVGFLRLFRAARLIKL). Over 1204–1222 (LRQGYTIRILLWTFVQSFK) the chain is Cytoplasmic. Residues 1223-1242 (ALPYVCLLIAMLFFIYAIIG) traverse the membrane as a helical segment. Over 1243 to 1308 (MQVFGNIKLG…DAEKAPGEYC (66 aa)) the chain is Extracellular. Positions 1306–1348 (EYCGSTLAYAYFVSFIFFCSFLMLNLFVAVIMDNFDYLTRDSS) are phenylalkylamine binding. Residues 1309–1333 (GSTLAYAYFVSFIFFCSFLMLNLFV) traverse the membrane as a helical segment. Residues 1334-1851 (AVIMDNFDYL…HSDSDEEDWC (518 aa)) are Cytoplasmic-facing. The EF-hand domain maps to 1353 to 1388 (HHLDEFVRIWAEYDPNATGKIHYTEMYDMLKNMDPP). D1366, N1368, T1370, K1372, and E1377 together coordinate Ca(2+). 4 disordered regions span residues 1513–1572 (DASR…HHDI), 1588–1653 (TRHP…SPAR), 1685–1764 (RAGI…DRDR), and 1823–1851 (VLPSPVLNGFKPKSGLNPRHSDSDEEDWC). Positions 1589–1600 (RHPRHGNSHPRY) are enriched in basic residues. Low complexity predominate over residues 1604-1619 (SWSASTSPARSPSPSR). 2 stretches are compositionally biased toward polar residues: residues 1637–1649 (YGTTSLCQRSRSP) and 1698–1710 (KPSTLQLKPTNIN). Over residues 1734–1764 (HHRDLLRDPRDMYYSSRERERDRERLRDRDR) the composition is skewed to basic and acidic residues.

The protein belongs to the calcium channel alpha-1 subunit (TC 1.A.1.11) family. Expressed widely in the embryonic nervous system.

Its subcellular location is the membrane. Voltage-sensitive calcium channels (VSCC) mediate the entry of calcium ions into excitable cells and are also involved in a variety of calcium-dependent processes, including muscle contraction, neurotransmitter release, gene expression, cell motility, cell division and cell death. Probably encodes a dihydropyridine-insensitive current. Vital for survival to adulthood. In Drosophila melanogaster (Fruit fly), this protein is Voltage-dependent calcium channel type A subunit alpha-1 (cac).